Consider the following 420-residue polypeptide: Dynein axonemal assembly factor 4 (420 aa).

Residues 3-87 (LQVSDYSWQQ…KEAAMWETLS (85 aa)) enclose the CS domain. The interval 7 to 103 (DYSWQQTKTA…ETMQRIREKS (97 aa)) is mediates interaction with ESR1 and STUB1. TPR repeat units lie at residues 290 to 323 (PEWL…NNKM), 324 to 357 (PLLY…LMPP), and 366 to 399 (MKAH…DPSN).

In terms of assembly, interacts with ZMYND10. Interacts with STUB1. Interacts with ESR1 and ESR2. Interacts with DNAAF2. Interacts with CCT3, CCT4, CCT5 and CCT8. Interacts with DNAAF6/PIH1D3.

It localises to the nucleus. The protein localises to the cytoplasm. Its subcellular location is the cell projection. The protein resides in the neuron projection. It is found in the dynein axonemal particle. Its function is as follows. Involved in neuronal migration during development of the cerebral neocortex. May regulate the stability and proteasomal degradation of the estrogen receptors that play an important role in neuronal differentiation, survival and plasticity. Axonemal dynein assembly factor required for ciliary motility. This chain is Dynein axonemal assembly factor 4, found in Pongo pygmaeus (Bornean orangutan).